A 193-amino-acid chain; its full sequence is Potassium-transporting ATPase KdpC subunit (193 aa).

Residues 7–27 (PLIVVFVVLVAVTGLAYPAVM) form a helical membrane-spanning segment.

This sequence belongs to the KdpC family. As to quaternary structure, the system is composed of three essential subunits: KdpA, KdpB and KdpC.

It localises to the cell inner membrane. Part of the high-affinity ATP-driven potassium transport (or Kdp) system, which catalyzes the hydrolysis of ATP coupled with the electrogenic transport of potassium into the cytoplasm. This subunit acts as a catalytic chaperone that increases the ATP-binding affinity of the ATP-hydrolyzing subunit KdpB by the formation of a transient KdpB/KdpC/ATP ternary complex. This is Potassium-transporting ATPase KdpC subunit from Burkholderia mallei (strain NCTC 10247).